Here is a 377-residue protein sequence, read N- to C-terminus: tRNA(Met) cytidine acetate ligase (377 aa).

ATP contacts are provided by residues 7 to 20 (ITEYNPFHNGHLYH), Gly101, Asn152, and Arg179.

It belongs to the TmcAL family.

It localises to the cytoplasm. The catalysed reaction is cytidine(34) in elongator tRNA(Met) + acetate + ATP = N(4)-acetylcytidine(34) in elongator tRNA(Met) + AMP + diphosphate. Its function is as follows. Catalyzes the formation of N(4)-acetylcytidine (ac(4)C) at the wobble position of elongator tRNA(Met), using acetate and ATP as substrates. First activates an acetate ion to form acetyladenylate (Ac-AMP) and then transfers the acetyl group to tRNA to form ac(4)C34. This Oenococcus oeni (strain ATCC BAA-331 / PSU-1) protein is tRNA(Met) cytidine acetate ligase.